Here is a 220-residue protein sequence, read N- to C-terminus: CDP-diacylglycerol--inositol 3-phosphatidyltransferase (220 aa).

Residues methionine 1 to proline 20 lie on the Cytoplasmic side of the membrane. Residues asparagine 21–histidine 41 form a helical membrane-spanning segment. At proline 42–phenylalanine 45 the chain is on the lumenal side. The chain crosses the membrane as a helical span at residues threonine 46 to tyrosine 66. Residues aspartate 56 and aspartate 59 each contribute to the Mg(2+) site. Residues glycine 60, arginine 64, and serine 70 each coordinate a CDP-1,2-diacyl-sn-glycerol. At asparagine 67–valine 75 the chain is on the cytoplasmic side. Residues leucine 76–tyrosine 96 form a helical membrane-spanning segment. Residues aspartate 77 and aspartate 81 each contribute to the Mg(2+) site. Residue aspartate 81 is the Proton acceptor of the active site. The Lumenal segment spans residues proline 97–glutamine 98. Residues tryptophan 99–tyrosine 119 form a helical membrane-spanning segment. Residues alanine 120–threonine 145 are Cytoplasmic-facing. Residues arginine 146–leucine 166 form a helical membrane-spanning segment. Topologically, residues glutamine 167–serine 170 are lumenal. The helical transmembrane segment at asparagine 171 to glutamine 191 threads the bilayer. Residues threonine 192 to tyrosine 220 lie on the Cytoplasmic side of the membrane.

Belongs to the CDP-alcohol phosphatidyltransferase class-I family. The cofactor is Mn(2+). It depends on Mg(2+) as a cofactor.

It is found in the microsome membrane. The protein resides in the endoplasmic reticulum membrane. Its subcellular location is the golgi apparatus membrane. It localises to the mitochondrion outer membrane. It catalyses the reaction a CDP-1,2-diacyl-sn-glycerol + myo-inositol = a 1,2-diacyl-sn-glycero-3-phospho-(1D-myo-inositol) + CMP + H(+). Its function is as follows. Catalyzes the synthesis of phosphatidylinositol (PtdIns). The protein is CDP-diacylglycerol--inositol 3-phosphatidyltransferase of Saccharomyces cerevisiae (strain ATCC 204508 / S288c) (Baker's yeast).